Reading from the N-terminus, the 159-residue chain is Phosphopantetheine adenylyltransferase (159 aa).

Thr10 is a binding site for substrate. Residues 10-11 (TF) and His18 each bind ATP. Residues Lys42, Met74, and Arg88 each coordinate substrate. ATP is bound by residues 89–91 (GLR), Glu99, and 124–130 (WSFISSS).

Belongs to the bacterial CoaD family. As to quaternary structure, homohexamer. The cofactor is Mg(2+).

The protein resides in the cytoplasm. The catalysed reaction is (R)-4'-phosphopantetheine + ATP + H(+) = 3'-dephospho-CoA + diphosphate. The protein operates within cofactor biosynthesis; coenzyme A biosynthesis; CoA from (R)-pantothenate: step 4/5. Functionally, reversibly transfers an adenylyl group from ATP to 4'-phosphopantetheine, yielding dephospho-CoA (dPCoA) and pyrophosphate. In Shigella dysenteriae serotype 1 (strain Sd197), this protein is Phosphopantetheine adenylyltransferase.